The sequence spans 359 residues: Fructose-bisphosphate aldolase (359 aa).

Ser50 is a D-glyceraldehyde 3-phosphate binding site. The Proton donor role is filled by Asp83. 4 residues coordinate Zn(2+): His84, Asp105, Glu142, and His198. Gly199 lines the dihydroxyacetone phosphate pocket. His232 contacts Zn(2+). Residues 233–235 and 275–278 contribute to the dihydroxyacetone phosphate site; these read GSS and NIDT.

It belongs to the class II fructose-bisphosphate aldolase family. The cofactor is Zn(2+).

The catalysed reaction is beta-D-fructose 1,6-bisphosphate = D-glyceraldehyde 3-phosphate + dihydroxyacetone phosphate. Its pathway is carbohydrate degradation; glycolysis; D-glyceraldehyde 3-phosphate and glycerone phosphate from D-glucose: step 4/4. Catalyzes the aldol condensation of dihydroxyacetone phosphate (DHAP or glycerone-phosphate) with glyceraldehyde 3-phosphate (G3P) to form fructose 1,6-bisphosphate (FBP) in gluconeogenesis and the reverse reaction in glycolysis. The protein is Fructose-bisphosphate aldolase (fba) of Nostoc commune.